Here is a 269-residue protein sequence, read N- to C-terminus: Shikimate dehydrogenase (NADP(+)) (269 aa).

Residues 17-19 and Thr-64 each bind shikimate; that span reads SKS. Lys-68 functions as the Proton acceptor in the catalytic mechanism. An NADP(+)-binding site is contributed by Glu-80. Shikimate is bound by residues Asn-89 and Asp-105. NADP(+) contacts are provided by residues 130-134, 154-159, and Met-213; these read GAGGA and NRTHAK. Tyr-215 contributes to the shikimate binding site. Gly-237 lines the NADP(+) pocket.

The protein belongs to the shikimate dehydrogenase family. Homodimer.

The enzyme catalyses shikimate + NADP(+) = 3-dehydroshikimate + NADPH + H(+). Its pathway is metabolic intermediate biosynthesis; chorismate biosynthesis; chorismate from D-erythrose 4-phosphate and phosphoenolpyruvate: step 4/7. In terms of biological role, involved in the biosynthesis of the chorismate, which leads to the biosynthesis of aromatic amino acids. Catalyzes the reversible NADPH linked reduction of 3-dehydroshikimate (DHSA) to yield shikimate (SA). This chain is Shikimate dehydrogenase (NADP(+)), found in Neisseria pharyngis.